A 1038-amino-acid chain; its full sequence is Pentatricopeptide repeat-containing protein At5g27270 (1038 aa).

The segment covering 23 to 38 (SRNSRISIKSSSSSSK) has biased composition (low complexity). A disordered region spans residues 23–69 (SRNSRISIKSSSSSSKVRPDPWSLSDGNPEKPKPRYERPKHPLSDDD). Residues 50-69 (NPEKPKPRYERPKHPLSDDD) are compositionally biased toward basic and acidic residues. 23 PPR repeats span residues 187-221 (SVVV…GCEP), 222-256 (DAVA…RILL), 257-291 (STSV…GVPP), 292-326 (NEFT…GFVP), 327-361 (EEVT…GIVP), 362-396 (SNYT…KIPA), 397-431 (DEVI…NLLA), 432-466 (DEKT…DIPL), 467-501 (SRFA…GLPD), 502-535 (ASSC…QVHF), 536-570 (DIEL…ARVK), 601-631 (DVMA…MFKT), 634-668 (GSSA…GLRM), 669-699 (EEET…AGES), 703-737 (GKSV…GCDP), 738-772 (GAVT…NIEL), 773-807 (DTVG…GVPC), 808-842 (SIQT…GLYL), 843-877 (DEKI…GIKP), 878-912 (GTPS…GRCT), 913-947 (DLST…GIPL), 948-982 (SHSH…GISP), and 983-1017 (DSAC…SVED).

The protein belongs to the PPR family. P subfamily.

The polypeptide is Pentatricopeptide repeat-containing protein At5g27270 (EMB976) (Arabidopsis thaliana (Mouse-ear cress)).